Reading from the N-terminus, the 309-residue chain is tRNA pseudouridine synthase B (309 aa).

D39 (nucleophile) is an active-site residue.

Belongs to the pseudouridine synthase TruB family. Type 1 subfamily.

The catalysed reaction is uridine(55) in tRNA = pseudouridine(55) in tRNA. Its function is as follows. Responsible for synthesis of pseudouridine from uracil-55 in the psi GC loop of transfer RNAs. The sequence is that of tRNA pseudouridine synthase B from Bacillus velezensis (strain DSM 23117 / BGSC 10A6 / LMG 26770 / FZB42) (Bacillus amyloliquefaciens subsp. plantarum).